Here is a 238-residue protein sequence, read N- to C-terminus: Large ribosomal subunit protein uL5c (238 aa).

It belongs to the universal ribosomal protein uL5 family. In terms of assembly, part of the 50S ribosomal subunit; contacts the 5S rRNA.

The protein resides in the plastid. It is found in the chloroplast. In terms of biological role, binds 5S rRNA, forms part of the central protuberance of the 50S subunit. This is Large ribosomal subunit protein uL5c (rpl5) from Thalassiosira pseudonana (Marine diatom).